Here is a 492-residue protein sequence, read N- to C-terminus: Malonyl-CoA decarboxylase, mitochondrial (492 aa).

Residues 1 to 28 (MRGLGPGLRARRLLPLRSPPRPPGPRGR) form a disordered region. A mitochondrion-targeting transit peptide spans 1–38 (MRGLGPGLRARRLLPLRSPPRPPGPRGRRLCGGLAASA). The alpha-helical domain stretch occupies residues 39–189 (MDELLRRAVP…VLKSMLSEWF (151 aa)). N6-acetyllysine is present on K58. K167 is modified (N6-acetyllysine; alternate). An N6-succinyllysine; alternate modification is found at K167. Residues 190 to 492 (SSGFLNLERV…VAQFQNNSKL (303 aa)) form a catalytic domain region. At K210 the chain carries N6-acetyllysine. N6-succinyllysine is present on K221. Residue 298-304 (QGVELGT) coordinates malonyl-CoA. K316 is subject to N6-acetyllysine. S328 contacts malonyl-CoA. The active-site Proton acceptor is S328. An N6-acetyllysine; alternate modification is found at K385. N6-succinyllysine; alternate is present on K385. An N6-acetyllysine modification is found at K388. H422 contacts malonyl-CoA. The Proton donor role is filled by H422. 2 positions are modified to N6-acetyllysine: K441 and K471. The short motif at 490–492 (SKL) is the Microbody targeting signal element.

As to quaternary structure, homotetramer. Dimer of dimers. The two subunits within a dimer display conformational differences suggesting that at any given moment, only one of the two subunits is competent for malonyl-CoA binding and catalytic activity. Under oxidizing conditions, can form disulfide-linked homotetramers (in vitro). Associates with the peroxisomal targeting signal receptor PEX5. In terms of processing, interchain disulfide bonds may form in peroxisomes (Potential). Interchain disulfide bonds are not expected to form in the reducing environment of the cytoplasm and mitochondria. Post-translationally, acetylation at Lys-471 activates malonyl-CoA decarboxylase activity. Deacetylation at Lys-471 by SIRT4 represses activity, leading to promote lipogenesis.

The protein resides in the cytoplasm. It is found in the mitochondrion matrix. The protein localises to the peroxisome. It localises to the peroxisome matrix. It catalyses the reaction malonyl-CoA + H(+) = acetyl-CoA + CO2. The protein operates within metabolic intermediate biosynthesis; acetyl-CoA biosynthesis; acetyl-CoA from malonyl-CoA: step 1/1. Its activity is regulated as follows. Malonyl-CoA decarboxylase activity does not require any cofactors or divalent metal ions. Its function is as follows. Catalyzes the conversion of malonyl-CoA to acetyl-CoA. In the fatty acid biosynthesis MCD selectively removes malonyl-CoA and thus assures that methyl-malonyl-CoA is the only chain elongating substrate for fatty acid synthase and that fatty acids with multiple methyl side chains are produced. In peroxisomes it may be involved in degrading intraperoxisomal malonyl-CoA, which is generated by the peroxisomal beta-oxidation of odd chain-length dicarboxylic fatty acids. Plays a role in the metabolic balance between glucose and lipid oxidation in muscle independent of alterations in insulin signaling. Plays a role in controlling the extent of ischemic injury by promoting glucose oxidation. This is Malonyl-CoA decarboxylase, mitochondrial from Mus musculus (Mouse).